We begin with the raw amino-acid sequence, 461 residues long: Armadillo repeat-containing X-linked protein 1 (461 aa).

The Mitochondrial intermembrane segment spans residues 1–6 (MGRTRE). Mitochondrion outer membrane (MOM)-targeting sequence regions lie at residues 1–6 (MGRTRE) and 26–36 (RLTWGKDENEK). The chain crosses the membrane as a helical; Signal-anchor span at residues 7 to 29 (AGCVAAGMVIGAGACYCVYRLTW). The Cytoplasmic portion of the chain corresponds to 30-461 (GKDENEKLWD…VKVLKVLTKL (432 aa)). Disordered regions lie at residues 34–110 (NEKL…HSEG) and 148–192 (SSLP…PATA). Residues 38 to 51 (WDDEDEEEEEEEES) are compositionally biased toward acidic residues. The segment covering 96 to 110 (PDVKKEVYPESHSEG) has biased composition (basic and acidic residues). The span at 167-185 (SRARNRTSGKVKRKNRSKS) shows a compositional bias: basic residues. 4 ARM repeats span residues 203 to 243 (PYKI…NNAA), 245 to 284 (SFNQ…NLSV), 366 to 406 (PAMT…NIND), and 423 to 461 (SSLF…LTKL).

The protein belongs to the eutherian X-chromosome-specific Armcx family. As to quaternary structure, interacts with MIRO1.

Its subcellular location is the mitochondrion. It localises to the mitochondrion outer membrane. Functionally, regulates mitochondrial transport during axon regeneration. Increases the proportion of motile mitochondria by recruiting stationary mitochondria into the motile pool. Enhances mitochondria movement and neurite growth in both adult axons and embryonic neurons. Promotes neuronal survival and axon regeneration after nerve injury. May link mitochondria to the Trak1-kinesin motor complex via its interaction with MIRO1. The protein is Armadillo repeat-containing X-linked protein 1 (Armcx1) of Rattus norvegicus (Rat).